Here is a 313-residue protein sequence, read N- to C-terminus: Putative olfactory receptor 2B3 (313 aa).

The Extracellular segment spans residues 1–25 (MNWENESSPKEFILLGFSDRAWLQM). Asparagine 5 carries an N-linked (GlcNAc...) asparagine glycan. A helical membrane pass occupies residues 26-49 (PLFVVLLISYTITIFGNVSIMMVC). Residues 50 to 57 (ILDPKLHT) are Cytoplasmic-facing. The chain crosses the membrane as a helical span at residues 58 to 79 (PMYFFLTNLSILDLCYTTTTVP). Over 80–100 (HMLVNIGCNKKTISYAGCVAH) the chain is Extracellular. A disulfide bond links cysteine 97 and cysteine 189. The helical transmembrane segment at 101–120 (LIIFLALGATECLLLAVMSF) threads the bilayer. Residues 121 to 139 (DRYVAVCRPLHYVVIMNYW) lie on the Cytoplasmic side of the membrane. Residues 140 to 158 (FCLRMAAFSWLIGFGNSVL) form a helical membrane-spanning segment. Topologically, residues 159–195 (QSSLTLNMPRCGHQEVDHFFCEVPALLKLSCADTKPI) are extracellular. A helical membrane pass occupies residues 196-219 (EAELFFFSVLILLIPVTLILISYG). Residues 220-236 (FIAQAVLKIRSAEGRQK) are Cytoplasmic-facing. The helical transmembrane segment at 237-259 (AFGTCGSHMIVVSLFYGTAIYMY) threads the bilayer. At 260 to 272 (LQPPSSTSKDWGK) the chain is on the extracellular side. Residues 273-292 (MVSLFYGIITSMLNSLIYSL) form a helical membrane-spanning segment. Topologically, residues 293–313 (RNKDMKEAFKRLMPRIFFCKK) are cytoplasmic.

The protein belongs to the G-protein coupled receptor 1 family.

It is found in the cell membrane. Functionally, odorant receptor. The sequence is that of Putative olfactory receptor 2B3 (OR2B3) from Homo sapiens (Human).